The chain runs to 166 residues: Nucleotide-binding protein SUN_0226 (166 aa).

The protein belongs to the YajQ family.

Nucleotide-binding protein. The chain is Nucleotide-binding protein SUN_0226 from Sulfurovum sp. (strain NBC37-1).